The primary structure comprises 187 residues: Protein GrpE (187 aa).

The span at 1–15 (MKETKQEEMEVREDC) shows a compositional bias: basic and acidic residues. The interval 1 to 40 (MKETKQEEMEVREDCESVDSNLEATVEEMESTKGTSEDLE) is disordered.

This sequence belongs to the GrpE family. In terms of assembly, homodimer.

The protein resides in the cytoplasm. Participates actively in the response to hyperosmotic and heat shock by preventing the aggregation of stress-denatured proteins, in association with DnaK and GrpE. It is the nucleotide exchange factor for DnaK and may function as a thermosensor. Unfolded proteins bind initially to DnaJ; upon interaction with the DnaJ-bound protein, DnaK hydrolyzes its bound ATP, resulting in the formation of a stable complex. GrpE releases ADP from DnaK; ATP binding to DnaK triggers the release of the substrate protein, thus completing the reaction cycle. Several rounds of ATP-dependent interactions between DnaJ, DnaK and GrpE are required for fully efficient folding. This Alkaliphilus oremlandii (strain OhILAs) (Clostridium oremlandii (strain OhILAs)) protein is Protein GrpE.